The following is a 351-amino-acid chain: Minor outer capsid protein P9 (351 aa).

The disordered stretch occupies residues 246–308 (GVPAALPQPD…KAVPSGNVSA (63 aa)). The span at 285-297 (MIRKKVETSKDAP) shows a compositional bias: basic and acidic residues.

The protein belongs to the phytoreovirus minor outer capsid protein P9 family.

The protein resides in the virion. It is found in the host cytoplasm. In terms of biological role, minor outer capsid protein. The polypeptide is Minor outer capsid protein P9 (Rice dwarf virus (isolate O) (RDV)).